The following is a 591-amino-acid chain: Aspartate--tRNA ligase (591 aa).

Glu173 is a binding site for L-aspartate. The tract at residues 197–200 (QLFK) is aspartate. Arg219 is a binding site for L-aspartate. ATP is bound by residues 219–221 (RDE) and Gln228. Residue His448 coordinates L-aspartate. Residue Glu482 participates in ATP binding. L-aspartate is bound at residue Arg489. 534 to 537 (GLDR) is a binding site for ATP.

Belongs to the class-II aminoacyl-tRNA synthetase family. Type 1 subfamily. In terms of assembly, homodimer.

It is found in the cytoplasm. It carries out the reaction tRNA(Asp) + L-aspartate + ATP = L-aspartyl-tRNA(Asp) + AMP + diphosphate. Catalyzes the attachment of L-aspartate to tRNA(Asp) in a two-step reaction: L-aspartate is first activated by ATP to form Asp-AMP and then transferred to the acceptor end of tRNA(Asp). The protein is Aspartate--tRNA ligase of Shewanella frigidimarina (strain NCIMB 400).